Consider the following 96-residue polypeptide: Protein RnfH (96 aa).

The protein belongs to the UPF0125 (RnfH) family.

This is Protein RnfH from Pectobacterium carotovorum subsp. carotovorum (strain PC1).